A 233-amino-acid chain; its full sequence is MGVHAEFVLSAVAQGQFPQDGLPEVALVGRSNVGKSSLINALVRNRKLARTSNTPGRTQALNFYRVWPQGKPRPEGEPQPDKDAGRTALSGPVLQAARESGAFYLVDMPGYGFARVSEAQRREWARLIEGYLLTRGALRGVLQIVDLRHPPTRDDVTMREWIRHHRLPSLCVATKADKIGRTAWPRHRQVIARELGLDGDGEPLVLFSAETGLGRDDVWRWIREHVQDWTFDM.

Positions 21-228 constitute an EngB-type G domain; it reads GLPEVALVGR…WRWIREHVQD (208 aa). Residues 29 to 36 and 56 to 60 contribute to the GTP site; these read GRSNVGKS and GRTQA. Mg(2+) contacts are provided by Ser-36 and Thr-58. The segment at 68–87 is disordered; that stretch reads PQGKPRPEGEPQPDKDAGRT. The span at 72 to 85 shows a compositional bias: basic and acidic residues; the sequence is PRPEGEPQPDKDAG. Residues 107–110, 174–177, and 207–209 contribute to the GTP site; these read DMPG, TKAD, and FSA.

It belongs to the TRAFAC class TrmE-Era-EngA-EngB-Septin-like GTPase superfamily. EngB GTPase family. Mg(2+) serves as cofactor.

Its function is as follows. Necessary for normal cell division and for the maintenance of normal septation. This is Probable GTP-binding protein EngB from Symbiobacterium thermophilum (strain DSM 24528 / JCM 14929 / IAM 14863 / T).